Reading from the N-terminus, the 163-residue chain is Nucleotide-binding protein NTHI1194 (163 aa).

Belongs to the YajQ family.

In terms of biological role, nucleotide-binding protein. In Haemophilus influenzae (strain 86-028NP), this protein is Nucleotide-binding protein NTHI1194.